The chain runs to 351 residues: Transmembrane protein 184 homolog DDB_G0279555 (351 aa).

A helical membrane pass occupies residues 1–21 (MWIVAGVCSGVAILLSFYLIY). Asn26 carries an N-linked (GlcNAc...) asparagine glycan. The next 5 helical transmembrane spans lie at 39 to 59 (ILIM…FVEL), 73 to 93 (YVLY…FDLV), 127 to 147 (FVLQ…VLET), 162 to 182 (YVWL…FLVL), and 206 to 226 (ILFF…FGVI). Asn236 carries N-linked (GlcNAc...) asparagine glycosylation. Residues 241-261 (LQDFITCVEMVILAICHHFFF) form a helical membrane-spanning segment. 2 N-linked (GlcNAc...) asparagine glycosylation sites follow: Asn301 and Asn304. Residues 327-351 (HNHPTTKKKDEESNLLEPEDKDIII) form a disordered region. Residues 339–351 (SNLLEPEDKDIII) are compositionally biased toward acidic residues.

It belongs to the TMEM184 family.

Its subcellular location is the cell membrane. In terms of biological role, probable transporter. The polypeptide is Transmembrane protein 184 homolog DDB_G0279555 (tmem184C) (Dictyostelium discoideum (Social amoeba)).